The following is a 224-amino-acid chain: Deoxyribose-phosphate aldolase (224 aa).

Aspartate 98 acts as the Proton donor/acceptor in catalysis. The Schiff-base intermediate with acetaldehyde role is filled by lysine 159. Lysine 189 serves as the catalytic Proton donor/acceptor.

Belongs to the DeoC/FbaB aldolase family. DeoC type 1 subfamily.

It is found in the cytoplasm. It carries out the reaction 2-deoxy-D-ribose 5-phosphate = D-glyceraldehyde 3-phosphate + acetaldehyde. Its pathway is carbohydrate degradation; 2-deoxy-D-ribose 1-phosphate degradation; D-glyceraldehyde 3-phosphate and acetaldehyde from 2-deoxy-alpha-D-ribose 1-phosphate: step 2/2. Functionally, catalyzes a reversible aldol reaction between acetaldehyde and D-glyceraldehyde 3-phosphate to generate 2-deoxy-D-ribose 5-phosphate. This chain is Deoxyribose-phosphate aldolase, found in Methanothermobacter thermautotrophicus (strain ATCC 29096 / DSM 1053 / JCM 10044 / NBRC 100330 / Delta H) (Methanobacterium thermoautotrophicum).